Consider the following 802-residue polypeptide: G-type lectin S-receptor-like serine/threonine-protein kinase At1g61550 (802 aa).

The signal sequence occupies residues 1–19 (MTRFACFLFSTLLLSFSYA). The Bulb-type lectin domain maps to 20 to 139 (AITPTSPLSI…VSGITLWQSF (120 aa)). Over 20-421 (AITPTSPLSI…EMGGNQRKKT (402 aa)) the chain is Extracellular. N-linked (GlcNAc...) asparagine glycosylation is found at Asn-48, Asn-89, Asn-112, Asn-231, and Asn-262. The 37-residue stretch at 273–309 (PANTCDFYGVCGPFGLCVMSIPPKCKCFKGFVPQFSE) folds into the EGF-like domain. 2 cysteine pairs are disulfide-bonded: Cys-277–Cys-289 and Cys-283–Cys-297. 3 N-linked (GlcNAc...) asparagine glycosylation sites follow: Asn-315, Asn-331, and Asn-370. The region spanning 328 to 410 (CQGNSTGRHV…GELLSIRLAS (83 aa)) is the PAN domain. Disulfide bonds link Cys-363–Cys-384 and Cys-367–Cys-373. The chain crosses the membrane as a helical span at residues 422-442 (IIASIVSISLFVTLASAAFGF). The Cytoplasmic portion of the chain corresponds to 443–802 (WRYRLKHNAI…EVTQSVVLGR (360 aa)). Residues 489–774 (FSLVNKLGQG…DLPLPKEPTF (286 aa)) enclose the Protein kinase domain. ATP is bound by residues 495–503 (LGQGGFGPV) and Lys-517. Ser-523 and Ser-538 each carry phosphoserine. The interval 578–595 (RKRVEIDWPKRFSIIQGI) is caM-binding. Asp-614 functions as the Proton acceptor in the catalytic mechanism. 2 positions are modified to phosphoserine: Ser-618 and Ser-631. Thr-648 carries the post-translational modification Phosphothreonine. Position 691 is a phosphoserine (Ser-691).

The protein belongs to the protein kinase superfamily. Ser/Thr protein kinase family.

It localises to the cell membrane. It catalyses the reaction L-seryl-[protein] + ATP = O-phospho-L-seryl-[protein] + ADP + H(+). The enzyme catalyses L-threonyl-[protein] + ATP = O-phospho-L-threonyl-[protein] + ADP + H(+). This chain is G-type lectin S-receptor-like serine/threonine-protein kinase At1g61550, found in Arabidopsis thaliana (Mouse-ear cress).